Here is a 391-residue protein sequence, read N- to C-terminus: Origin recognition complex subunit 2 (391 aa).

A disordered region spans residues 1 to 43 (MEEYTDSGEDKNVYSDDDNDYFTASTQNNRTSKNTDSSPLDPK). Residues 22 to 38 (FTASTQNNRTSKNTDSS) are compositionally biased toward polar residues.

The protein belongs to the ORC2 family. ORC is composed of six subunits.

Its subcellular location is the nucleus. Its function is as follows. Component of the origin recognition complex (ORC) that binds origins of replication. DNA-binding is ATP-dependent, however specific DNA sequences that define origins of replication have not been identified so far. ORC is required to assemble the pre-replication complex necessary to initiate DNA replication. The chain is Origin recognition complex subunit 2 (orcB) from Dictyostelium discoideum (Social amoeba).